The sequence spans 312 residues: Putative tricarboxylate transport protein, mitochondrial (312 aa).

3 Solcar repeats span residues 23–111, 122–208, and 218–303; these read EKTV…LKSQ, VMRL…LKDW, and ISKP…IIEF. Helical transmembrane passes span 29–49, 75–95, 126–146, 164–184, 221–241, and 286–306; these read IVIG…TEYV, VNGH…YGSI, LCGL…METV, FVHG…YKGV, PIVG…NTPI, and VCLD…FLDV.

It belongs to the mitochondrial carrier (TC 2.A.29) family.

It is found in the mitochondrion inner membrane. Transport of citrate across inner mitochondrial membrane. This Caenorhabditis elegans protein is Putative tricarboxylate transport protein, mitochondrial.